A 138-amino-acid polypeptide reads, in one-letter code: Putative phosphatidylinositol 3,4,5-trisphosphate 3-phosphatase TPTE2P1 (138 aa).

The C2 tensin-type domain occupies 1–75 (MPAAFPCVFP…FAVEILFGMV (75 aa)).

The sequence is that of Putative phosphatidylinositol 3,4,5-trisphosphate 3-phosphatase TPTE2P1 (TPTE2P1) from Homo sapiens (Human).